The chain runs to 103 residues: MINIDRALRSSIRTGKVVLGSNSSLEHGLRGDAKLIIYASDCPEHVRQKLRSLEVPVYAYQSSGRDLGAACGKPFPVAALAVIEPGDSEIMALLREIRGVANE.

It belongs to the eukaryotic ribosomal protein eL30 family.

This chain is Large ribosomal subunit protein eL30, found in Methanothrix thermoacetophila (strain DSM 6194 / JCM 14653 / NBRC 101360 / PT) (Methanosaeta thermophila).